Consider the following 515-residue polypeptide: Germ cell-less protein-like 1 (515 aa).

Positions 1-35 (MGSLSSRVLRQPRPALAQQAQGARAGGSARRPDTG) are disordered. Low complexity predominate over residues 11-29 (QPRPALAQQAQGARAGGSA). Positions 49–55 (SHKRKRS) match the Nuclear localization signal motif. Residues 65 to 85 (DSETDEDEEEGDEQQRLLNTP) are disordered. Serine 66 bears the Phosphoserine mark. The segment covering 67–76 (ETDEDEEEGD) has biased composition (acidic residues). The residue at position 68 (threonine 68) is a Phosphothreonine. A Nuclear localization signal motif is present at residues 85 to 91 (PRRKKLK). The 71-residue stretch at 108–178 (SDIKICALGE…LYRDDVLIKP (71 aa)) folds into the BTB domain.

As to quaternary structure, interacts with TMPO-beta, TSG101 and TFDP2. Interacts with EMD.

Its subcellular location is the nucleus matrix. In terms of biological role, possible function in spermatogenesis. Enhances the degradation of MDM2 and increases the amount of p53 probably by modulating the nucleocytoplasmic transport. This is Germ cell-less protein-like 1 (GMCL1) from Homo sapiens (Human).